The chain runs to 824 residues: Spindle-defective protein 2 (824 aa).

2 stretches are compositionally biased toward acidic residues: residues 16 to 27 (EIEDSPIDDNDN) and 35 to 44 (GDVELEEEEV). Positions 16-98 (EIEDSPIDDN…SRPASVMSDK (83 aa)) are disordered. Residues 59-70 (TNMTNPKVNDLT) show a composition bias toward polar residues. Residues 81-98 (SAASSRSASRPASVMSDK) are compositionally biased toward low complexity. Residues 111-131 (ENAIEEYTNQVFADENKADLL) are a coiled coil. The disordered stretch occupies residues 189 to 252 (RAKPGANDNE…GQYQGPNFDL (64 aa)). The span at 207–225 (NVPTTSDKSAFITSPMNST) shows a compositional bias: polar residues. Positions 304 to 324 (NNKNQDLFAALEEARKRRAAQ) form a coiled coil. 2 disordered regions span residues 342–372 (KPTSARHSGNVVSSTSNDNTTAASSKDLTTS) and 433–455 (NNGNVSLSHGRDGRDSVSSVRTM). The span at 349–366 (SGNVVSSTSNDNTTAASS) shows a compositional bias: low complexity.

In terms of assembly, interacts with sas-7 (via C-terminus); may be recruited to centrioles by sas-7.

It localises to the cytoplasm. It is found in the cytoskeleton. Its subcellular location is the microtubule organizing center. The protein localises to the centrosome. The protein resides in the centriole. Required both for centrosome duplication and maturation. Required for pericentriolar material (PCM) recruitment. In Caenorhabditis elegans, this protein is Spindle-defective protein 2.